The following is a 281-amino-acid chain: CLA biosynthesis isomerase (281 aa).

The protein belongs to the ADC family.

The protein localises to the cytoplasm. It catalyses the reaction 10-oxo-(12Z)-octadecenoate = 10-oxo-(11E)-octadecenoate. The protein operates within lipid metabolism; fatty acid metabolism. Is involved in a saturation metabolic pathway of polyunsaturated fatty acids, that detoxifies unsaturated fatty acids and generates hydroxy fatty acids, oxo fatty acids, conjugated fatty acids such as conjugated linoleic acids (CLAs), and partially saturated trans-fatty acids as intermediates. CLA-DC catalyzes the migration of the carbon-carbon double bond in 10-oxo-(12Z)-octadecenoate to produce 10-oxo-(11E)-octadecenoate, during linoleate metabolism. As part of the gut microbiome, this enzyme modifies host fatty acid composition and is expected to improve human health by altering lipid metabolism related to the onset of metabolic syndrome. The protein is CLA biosynthesis isomerase of Lactiplantibacillus plantarum (Lactobacillus plantarum).